A 241-amino-acid polypeptide reads, in one-letter code: Synaptogyrin (241 aa).

An MARVEL domain is found at 30–179 (FAMKPQVVIR…CALMAYKRFL (150 aa)). The next 4 membrane-spanning stretches (helical) occupy residues 34–54 (PQVVIRALCWLFSVVVFGCIS), 81–101 (MVGVFGFLASMGFMGGEFLFE), 115–135 (ADMGFSALWTFMYFVAFLYLW), and 155–175 (TAIWFCLFSIVSWALCALMAY). The disordered stretch occupies residues 216-241 (ASPFGQPQQGGMEQQQSGMEYQQPTY). Residues 220 to 241 (GQPQQGGMEQQQSGMEYQQPTY) show a composition bias toward low complexity.

Belongs to the synaptogyrin family.

Its subcellular location is the cytoplasmic vesicle membrane. The protein resides in the cytoplasmic vesicle. It is found in the secretory vesicle membrane. It localises to the secretory vesicle. The protein localises to the synaptic vesicle membrane. Required for the correct formation of synaptic vesicles at nerve terminals and has a role in the regulation of the synaptic vesicle exo-endocytic cycle. This chain is Synaptogyrin, found in Drosophila melanogaster (Fruit fly).